Here is a 263-residue protein sequence, read N- to C-terminus: 3-methyl-2-oxobutanoate hydroxymethyltransferase (263 aa).

The Mg(2+) site is built by Asp-45 and Asp-84. Residues 45 to 46 (DS), Asp-84, and Lys-112 contribute to the 3-methyl-2-oxobutanoate site. Glu-114 is a binding site for Mg(2+). The Proton acceptor role is filled by Glu-180.

Belongs to the PanB family. Homodecamer; pentamer of dimers. It depends on Mg(2+) as a cofactor.

It is found in the cytoplasm. The enzyme catalyses 3-methyl-2-oxobutanoate + (6R)-5,10-methylene-5,6,7,8-tetrahydrofolate + H2O = 2-dehydropantoate + (6S)-5,6,7,8-tetrahydrofolate. The protein operates within cofactor biosynthesis; (R)-pantothenate biosynthesis; (R)-pantoate from 3-methyl-2-oxobutanoate: step 1/2. In terms of biological role, catalyzes the reversible reaction in which hydroxymethyl group from 5,10-methylenetetrahydrofolate is transferred onto alpha-ketoisovalerate to form ketopantoate. This is 3-methyl-2-oxobutanoate hydroxymethyltransferase from Klebsiella pneumoniae (strain 342).